A 439-amino-acid chain; its full sequence is Methylenetetrahydrofolate--tRNA-(uracil-5-)-methyltransferase TrmFO (439 aa).

An FAD-binding site is contributed by 9 to 14 (GAGLAG).

Belongs to the MnmG family. TrmFO subfamily. FAD serves as cofactor.

The protein localises to the cytoplasm. It catalyses the reaction uridine(54) in tRNA + (6R)-5,10-methylene-5,6,7,8-tetrahydrofolate + NADH + H(+) = 5-methyluridine(54) in tRNA + (6S)-5,6,7,8-tetrahydrofolate + NAD(+). The catalysed reaction is uridine(54) in tRNA + (6R)-5,10-methylene-5,6,7,8-tetrahydrofolate + NADPH + H(+) = 5-methyluridine(54) in tRNA + (6S)-5,6,7,8-tetrahydrofolate + NADP(+). Catalyzes the folate-dependent formation of 5-methyl-uridine at position 54 (M-5-U54) in all tRNAs. The sequence is that of Methylenetetrahydrofolate--tRNA-(uracil-5-)-methyltransferase TrmFO from Desulforudis audaxviator (strain MP104C).